A 708-amino-acid polypeptide reads, in one-letter code: Solute carrier family 15 member 1 (708 aa).

The chain crosses the membrane as a helical span at residues M1–V21. The Extracellular portion of the chain corresponds to N22–T53. N-linked (GlcNAc...) asparagine glycosylation is present at N50. The chain crosses the membrane as a helical span at residues A54–A74. Residues D75–K82 lie on the Cytoplasmic side of the membrane. Residues T83–I103 form a helical membrane-spanning segment. At N104–L118 the chain is on the extracellular side. Residues P119–I139 form a helical membrane-spanning segment. Residues K140–R161 are Cytoplasmic-facing. The chain crosses the membrane as a helical span at residues F162–P182. Residues M183–Y198 lie on the Extracellular side of the membrane. The chain crosses the membrane as a helical span at residues P199–G219. Residues S220–Q276 are Cytoplasmic-facing. The helical transmembrane segment at I277–F297 threads the bilayer. Residues D298–T327 lie on the Extracellular side of the membrane. A helical membrane pass occupies residues V328–I348. The Cytoplasmic segment spans residues A349–M361. The helical transmembrane segment at A362 to I382 threads the bilayer. Residues D383 to Q584 lie on the Extracellular side of the membrane. The tract at residues D383–Q584 is extracellular domain (ECD). 6 N-linked (GlcNAc...) asparagine glycosylation sites follow: N404, N408, N439, N509, N514, and N562. The chain crosses the membrane as a helical span at residues I585–F605. Over S606–Q619 the chain is Cytoplasmic. A helical membrane pass occupies residues A620–G640. Topologically, residues Q641 to Q645 are extracellular. A helical transmembrane segment spans residues W646 to M666. At A667–M708 the chain is on the cytoplasmic side.

Belongs to the major facilitator superfamily. Proton-dependent oligopeptide transporter (POT/PTR) (TC 2.A.17) family. In terms of assembly, interacts (via extracellular domain region) with trypsin. As to expression, expressed in small intestine.

The protein resides in the apical cell membrane. It carries out the reaction a dipeptide(out) + H(+)(out) = a dipeptide(in) + H(+)(in). It catalyses the reaction an L-amino acid tripeptide(out) + H(+)(out) = an L-amino acid tripeptide(in) + H(+)(in). The catalysed reaction is L-alanyl-L-lysine(out) + H(+)(out) = L-alanyl-L-lysine(in) + H(+)(in). The enzyme catalyses L-alanyl-L-proline(out) + H(+)(out) = L-alanyl-L-proline(in) + H(+)(in). It carries out the reaction L-alanyl-L-valine(out) + H(+)(out) = L-alanyl-L-valine(in) + H(+)(in). It catalyses the reaction carnosine(out) + H(+)(out) = carnosine(in) + H(+)(in). The catalysed reaction is glycyl-L-glutamine(out) + H(+)(out) = glycyl-L-glutamine(in) + H(+)(in). The enzyme catalyses glycyl-L-leucine(out) + H(+)(out) = glycyl-L-leucine(in) + H(+)(in). It carries out the reaction glycyl-L-proline(out) + H(+)(out) = glycyl-L-proline(in) + H(+)(in). It catalyses the reaction glycyl-sarcosine(out) + H(+)(out) = glycyl-sarcosine(in) + H(+)(in). The catalysed reaction is L-leucyl-L-leucine(out) + H(+)(out) = L-leucyl-L-leucine(in) + H(+)(in). The enzyme catalyses L-leucyl-L-proline(out) + H(+)(out) = L-leucyl-L-proline(in) + H(+)(in). It carries out the reaction L-phenylalanyl-L-leucine(out) + H(+)(out) = L-phenylalanyl-L-leucine(in) + H(+)(in). It catalyses the reaction L-phenylalanyl-L-phenylalanine(out) + H(+)(out) = L-phenylalanyl-L-phenylalanine(in) + H(+)(in). The catalysed reaction is L-lysyl-glycine(out) + H(+)(out) = L-lysyl-glycine(in) + H(+)(in). The enzyme catalyses L-tyrosylglycine(out) + H(+)(out) = L-tyrosylglycine(in) + H(+)(in). It carries out the reaction L-alanyl-L-aspartate(out) + 2 H(+)(out) = L-alanyl-L-aspartate(in) + 2 H(+)(in). It catalyses the reaction L-aspartyl-glycine(out) + 2 H(+)(out) = L-aspartyl-glycine(in) + 2 H(+)(in). The catalysed reaction is glycyl-L-aspartate(out) + 2 H(+)(out) = glycyl-L-aspartate(in) + 2 H(+)(in). The enzyme catalyses glycyl-L-glutamate(out) + 2 H(+)(out) = glycyl-L-glutamate(in) + 2 H(+)(in). It carries out the reaction L-alanyl-L-leucyl-L-alanine(out) + H(+)(out) = L-alanyl-L-leucyl-L-alanine(in) + H(+)(in). It catalyses the reaction L-alanyl-L-prolylglycine(out) + H(+)(out) = L-alanyl-L-prolylglycine(in) + H(+)(in). The catalysed reaction is glycylglycyl-L-isoleucine(out) + H(+)(out) = glycylglycyl-L-isoleucine(in) + H(+)(in). The enzyme catalyses glycylglycyl-L-proline(out) + H(+)(out) = glycylglycyl-L-proline(in) + H(+)(in). It carries out the reaction L-methionyl-L-phenylalanyl-L-methionine(out) + H(+)(out) = L-methionyl-L-phenylalanyl-L-methionine(in) + H(+)(in). It catalyses the reaction N-acetyl-D-muramoyl-L-alanyl-D-isoglutamine(out) + 2 H(+)(out) = N-acetyl-D-muramoyl-L-alanyl-D-isoglutamine(in) + 2 H(+)(in). The catalysed reaction is N(alpha)-formyl-L-methionyl-L-leucyl-L-phenylalanine(out) + 2 H(+)(out) = N(alpha)-formyl-L-methionyl-L-leucyl-L-phenylalanine(in) + 2 H(+)(in). In terms of biological role, electrogenic proton-coupled amino-acid transporter that transports oligopeptides of 2 to 4 amino acids with a preference for dipeptides. Transports neutral and monovalently charged peptides with a proton to peptide stoichiometry of 1:1 or 2:1. Primarily responsible for the absorption of dietary di- and tripeptides from the small intestinal lumen. Mediates transepithelial transport of muramyl and N-formylated bacterial dipeptides contributing to recognition of pathogenic bacteria by the mucosal immune system. This is Solute carrier family 15 member 1 from Homo sapiens (Human).